We begin with the raw amino-acid sequence, 367 residues long: NADH-quinone oxidoreductase subunit D (367 aa).

Belongs to the complex I 49 kDa subunit family. As to quaternary structure, NDH-1 is composed of 14 different subunits. Subunits NuoB, C, D, E, F, and G constitute the peripheral sector of the complex.

Its subcellular location is the cell membrane. It catalyses the reaction a quinone + NADH + 5 H(+)(in) = a quinol + NAD(+) + 4 H(+)(out). Its function is as follows. NDH-1 shuttles electrons from NADH, via FMN and iron-sulfur (Fe-S) centers, to quinones in the respiratory chain. The immediate electron acceptor for the enzyme in this species is believed to be ubiquinone. Couples the redox reaction to proton translocation (for every two electrons transferred, four hydrogen ions are translocated across the cytoplasmic membrane), and thus conserves the redox energy in a proton gradient. In Dehalococcoides mccartyi (strain ATCC BAA-2266 / KCTC 15142 / 195) (Dehalococcoides ethenogenes (strain 195)), this protein is NADH-quinone oxidoreductase subunit D.